The primary structure comprises 298 residues: MKNVHNTIDEARLGIMLNDLRLPTIKTLWPQFAEQADREGWPAARFLSAIAEHELAERAHRRIERHLAEAHLPPGKTLESFAFDAVPMVSKAQVMAIAAGDSWLAKGANILLFGPPGGGKSHLAAAIGLALIENGWRVLFTRTTDLVQKLQVARRELQLESAIAKLDKFDLLILDDLAYVTKDQAETSVLFELISARYERRSIMITANQPFGEWNRVFPDPAMTLAAVDRLVHHATIFEMNVESYRRRSAMEAKRHRGRPAAFATTKSASLIVAERQSEHDETLASDNQHDTFMPTAT.

ATP is bound at residue 114–121; the sequence is GPPGGGKS. The tract at residues 276 to 298 is disordered; that stretch reads RQSEHDETLASDNQHDTFMPTAT.

This sequence belongs to the IS21/IS1162 putative ATP-binding protein family.

In Sinorhizobium fredii (strain NBRC 101917 / NGR234), this protein is Putative insertion sequence ATP-binding protein y4iQ/y4nD/y4sD.